The chain runs to 290 residues: MLKTIHEKARHHTRPLWAWLKLLWQRIDEDNMTTLAGNLAYVSLLSLVPLVAVVFALFAAFPMFSDVSIQLRHFIFANFLPATGDVIQQYIEQFVANSNKMTAVGACGLIVTALLLMYSIDSALNAIWRSKRVRPKIYSFAVYWMILTLGPLLAGASLAISSYLLSLRWASDLNTVIDNVLRIFPLLLSWISFWLLYSIVPTIRVPNRDAIVGAFVAALLFEAGKKGFALYITMFPSYQLIYGVLAVIPILFVWVYWTWCIVLLGAEITVTLGEYRKLKQAAEQEEDDEP.

Transmembrane regions (helical) follow at residues leucine 44 to phenylalanine 64, valine 104 to leucine 124, phenylalanine 140 to isoleucine 160, isoleucine 183 to isoleucine 203, alanine 210 to leucine 230, and valine 244 to leucine 264.

The protein belongs to the UPF0761 family.

The protein localises to the cell inner membrane. The protein is UPF0761 membrane protein YihY of Escherichia fergusonii (strain ATCC 35469 / DSM 13698 / CCUG 18766 / IAM 14443 / JCM 21226 / LMG 7866 / NBRC 102419 / NCTC 12128 / CDC 0568-73).